A 571-amino-acid polypeptide reads, in one-letter code: Glutamate--tRNA ligase (571 aa).

The 'HIGH' region signature appears at 106-116 (PNPDGAFHLGN).

Belongs to the class-I aminoacyl-tRNA synthetase family. Glutamate--tRNA ligase type 2 subfamily.

It localises to the cytoplasm. It carries out the reaction tRNA(Glu) + L-glutamate + ATP = L-glutamyl-tRNA(Glu) + AMP + diphosphate. Functionally, catalyzes the attachment of glutamate to tRNA(Glu) in a two-step reaction: glutamate is first activated by ATP to form Glu-AMP and then transferred to the acceptor end of tRNA(Glu). This is Glutamate--tRNA ligase from Pyrococcus abyssi (strain GE5 / Orsay).